A 75-amino-acid polypeptide reads, in one-letter code: MRLVVCLVFLASFALVCQGQGCKGPYTRPILRPYVRPVVSYNACTLSCRGITTTQARSCCTRLGRCCHVAKGYSG.

The first 19 residues, 1–19 (MRLVVCLVFLASFALVCQG), serve as a signal peptide directing secretion. Q20 carries the pyrrolidone carboxylic acid modification. Disulfide bonds link C44/C59, C48/C66, and C60/C67. The residue at position 74 (S74) is a Serine amide.

The protein belongs to the penaeidin family.

It localises to the cytoplasmic granule. Antibacterial and antifungal activity. Presents chitin-binding activity. This Penaeus setiferus (Atlantic white shrimp) protein is Penaeidin-3m.